The following is a 321-amino-acid chain: Beta-ketoacyl-[acyl-carrier-protein] synthase III (321 aa).

Catalysis depends on residues Cys113 and His246. An ACP-binding region spans residues 247–251 (QANVR). Residue Asn276 is part of the active site.

This sequence belongs to the thiolase-like superfamily. FabH family. Homodimer.

It localises to the cytoplasm. The enzyme catalyses malonyl-[ACP] + acetyl-CoA + H(+) = 3-oxobutanoyl-[ACP] + CO2 + CoA. The protein operates within lipid metabolism; fatty acid biosynthesis. Functionally, catalyzes the condensation reaction of fatty acid synthesis by the addition to an acyl acceptor of two carbons from malonyl-ACP. Catalyzes the first condensation reaction which initiates fatty acid synthesis and may therefore play a role in governing the total rate of fatty acid production. Possesses both acetoacetyl-ACP synthase and acetyl transacylase activities. Its substrate specificity determines the biosynthesis of branched-chain and/or straight-chain of fatty acids. This Enterococcus faecalis (strain ATCC 700802 / V583) protein is Beta-ketoacyl-[acyl-carrier-protein] synthase III.